The chain runs to 312 residues: Coiled-coil domain-containing protein 160 homolog (312 aa).

Residues 126 to 281 (SEGAKFKNQL…EERKREKTHS (156 aa)) are a coiled coil.

This sequence belongs to the CCDC160 family.

This chain is Coiled-coil domain-containing protein 160 homolog, found in Xenopus tropicalis (Western clawed frog).